Consider the following 303-residue polypeptide: Quinolinate synthase (303 aa).

Positions 23 and 40 each coordinate iminosuccinate. Residue cysteine 85 coordinates [4Fe-4S] cluster. Residues 111–113 (YIN) and serine 128 each bind iminosuccinate. Cysteine 171 is a [4Fe-4S] cluster binding site. Iminosuccinate-binding positions include 197–199 (HPE) and threonine 214. Position 259 (cysteine 259) interacts with [4Fe-4S] cluster.

The protein belongs to the quinolinate synthase family. Type 2 subfamily. Requires [4Fe-4S] cluster as cofactor.

The protein resides in the cytoplasm. It catalyses the reaction iminosuccinate + dihydroxyacetone phosphate = quinolinate + phosphate + 2 H2O + H(+). It functions in the pathway cofactor biosynthesis; NAD(+) biosynthesis; quinolinate from iminoaspartate: step 1/1. Catalyzes the condensation of iminoaspartate with dihydroxyacetone phosphate to form quinolinate. This chain is Quinolinate synthase, found in Clostridium acetobutylicum (strain ATCC 824 / DSM 792 / JCM 1419 / IAM 19013 / LMG 5710 / NBRC 13948 / NRRL B-527 / VKM B-1787 / 2291 / W).